The following is a 746-amino-acid chain: Teichoic acid poly(glycerol phosphate) polymerase (746 aa).

Residues 473–477 (WHGTP), Arg540, 573–574 (PT), 610–612 (RMH), 652–653 (SS), and Asp657 each bind CDP-glycerol.

It belongs to the CDP-glycerol glycerophosphotransferase family.

It localises to the cell membrane. The enzyme catalyses 4-O-[(2R)-glycerylphospho]-N-acetyl-beta-D-mannosaminyl-(1-&gt;4)-N-acetyl-alpha-D-glucosaminyl di-trans,octa-cis-undecaprenyl diphosphate + n CDP-glycerol = 4-O-{[(2R)-1-glycerylphospho](n)-(2R)-1-glycerylphospho}-N-acetyl-beta-D-mannosaminyl-(1-&gt;4)-N-acetyl-alpha-D-glucosaminyl undecaprenyl diphosphate + n CMP + n H(+). It participates in cell wall biogenesis; poly(glycerol phosphate) teichoic acid biosynthesis. Its function is as follows. Responsible for the polymerization of the main chain of the major teichoic acid by sequential transfer of glycerol phosphate units from CDP-glycerol to the disaccharide linkage unit. Synthesizes polymers of approximately 35 glycerol phosphate units in length. The polypeptide is Teichoic acid poly(glycerol phosphate) polymerase (tagF) (Bacillus subtilis (strain 168)).